A 417-amino-acid polypeptide reads, in one-letter code: Serine hydroxymethyltransferase (417 aa).

Lys-54 carries the post-translational modification N6-acetyllysine. (6S)-5,6,7,8-tetrahydrofolate is bound by residues Leu-121 and 125-127 (GHL). An N6-(pyridoxal phosphate)lysine modification is found at Lys-229. Lys-250, Lys-285, and Lys-354 each carry N6-acetyllysine. 355 to 357 (SPF) contacts (6S)-5,6,7,8-tetrahydrofolate. Residue Lys-375 is modified to N6-acetyllysine.

Belongs to the SHMT family. Homodimer. The cofactor is pyridoxal 5'-phosphate.

Its subcellular location is the cytoplasm. It carries out the reaction (6R)-5,10-methylene-5,6,7,8-tetrahydrofolate + glycine + H2O = (6S)-5,6,7,8-tetrahydrofolate + L-serine. Its pathway is one-carbon metabolism; tetrahydrofolate interconversion. It participates in amino-acid biosynthesis; glycine biosynthesis; glycine from L-serine: step 1/1. Catalyzes the reversible interconversion of serine and glycine with tetrahydrofolate (THF) serving as the one-carbon carrier. This reaction serves as the major source of one-carbon groups required for the biosynthesis of purines, thymidylate, methionine, and other important biomolecules. Also exhibits THF-independent aldolase activity toward beta-hydroxyamino acids, producing glycine and aldehydes, via a retro-aldol mechanism. The sequence is that of Serine hydroxymethyltransferase from Shigella dysenteriae serotype 1 (strain Sd197).